The primary structure comprises 357 residues: 3-isopropylmalate dehydrogenase (357 aa).

NAD(+) is bound at residue 76 to 89; that stretch reads GPKWDDLPSEKRPE. The substrate site is built by arginine 96, arginine 106, arginine 135, and aspartate 224. Aspartate 224, aspartate 248, and aspartate 252 together coordinate Mg(2+). An NAD(+)-binding site is contributed by 282-294; sequence GSAPDIAGQDKAN.

Belongs to the isocitrate and isopropylmalate dehydrogenases family. LeuB type 1 subfamily. Homodimer. It depends on Mg(2+) as a cofactor. Mn(2+) is required as a cofactor.

It is found in the cytoplasm. The enzyme catalyses (2R,3S)-3-isopropylmalate + NAD(+) = 4-methyl-2-oxopentanoate + CO2 + NADH. Its pathway is amino-acid biosynthesis; L-leucine biosynthesis; L-leucine from 3-methyl-2-oxobutanoate: step 3/4. Catalyzes the oxidation of 3-carboxy-2-hydroxy-4-methylpentanoate (3-isopropylmalate) to 3-carboxy-4-methyl-2-oxopentanoate. The product decarboxylates to 4-methyl-2 oxopentanoate. The chain is 3-isopropylmalate dehydrogenase from Nitratidesulfovibrio vulgaris (strain ATCC 29579 / DSM 644 / CCUG 34227 / NCIMB 8303 / VKM B-1760 / Hildenborough) (Desulfovibrio vulgaris).